We begin with the raw amino-acid sequence, 315 residues long: Probable cell division protein WhiA (315 aa).

Positions 277–311 (SLQELGAMMPSGQISKSGVNHRLRKLNQIAEGYQQ) form a DNA-binding region, H-T-H motif.

This sequence belongs to the WhiA family.

In terms of biological role, involved in cell division and chromosome segregation. The chain is Probable cell division protein WhiA from Lacticaseibacillus casei (strain BL23) (Lactobacillus casei).